A 120-amino-acid chain; its full sequence is Large ribosomal subunit protein uL18 (120 aa).

The protein belongs to the universal ribosomal protein uL18 family. As to quaternary structure, part of the 50S ribosomal subunit; part of the 5S rRNA/L5/L18/L25 subcomplex. Contacts the 5S and 23S rRNAs.

In terms of biological role, this is one of the proteins that bind and probably mediate the attachment of the 5S RNA into the large ribosomal subunit, where it forms part of the central protuberance. In Janthinobacterium sp. (strain Marseille) (Minibacterium massiliensis), this protein is Large ribosomal subunit protein uL18.